Here is a 567-residue protein sequence, read N- to C-terminus: Urease subunit alpha (567 aa).

The 439-residue stretch at 129 to 567 (GGVDTHIHWI…LPMAQRYFLF (439 aa)) folds into the Urease domain. Ni(2+) contacts are provided by His134, His136, and Lys217. The residue at position 217 (Lys217) is an N6-carboxylysine. His219 is a substrate binding site. Ni(2+) contacts are provided by His246 and His272. His320 functions as the Proton donor in the catalytic mechanism. Residue Asp360 participates in Ni(2+) binding.

It belongs to the metallo-dependent hydrolases superfamily. Urease alpha subunit family. Heterotrimer of UreA (gamma), UreB (beta) and UreC (alpha) subunits. Three heterotrimers associate to form the active enzyme. Requires Ni cation as cofactor. Post-translationally, carboxylation allows a single lysine to coordinate two nickel ions.

It is found in the cytoplasm. It catalyses the reaction urea + 2 H2O + H(+) = hydrogencarbonate + 2 NH4(+). It participates in nitrogen metabolism; urea degradation; CO(2) and NH(3) from urea (urease route): step 1/1. The polypeptide is Urease subunit alpha (Escherichia coli O157:H7).